Reading from the N-terminus, the 212-residue chain is Kynurenine formamidase (212 aa).

A substrate-binding site is contributed by Trp18. Positions 48, 52, and 54 each coordinate Zn(2+). His58 (proton donor/acceptor) is an active-site residue. 2 residues coordinate Zn(2+): His160 and Glu172.

Belongs to the Cyclase 1 superfamily. KynB family. In terms of assembly, homodimer. Requires Zn(2+) as cofactor.

It catalyses the reaction N-formyl-L-kynurenine + H2O = L-kynurenine + formate + H(+). It functions in the pathway amino-acid degradation; L-tryptophan degradation via kynurenine pathway; L-kynurenine from L-tryptophan: step 2/2. In terms of biological role, catalyzes the hydrolysis of N-formyl-L-kynurenine to L-kynurenine, the second step in the kynurenine pathway of tryptophan degradation. This chain is Kynurenine formamidase, found in Paraburkholderia phytofirmans (strain DSM 17436 / LMG 22146 / PsJN) (Burkholderia phytofirmans).